Here is a 488-residue protein sequence, read N- to C-terminus: Cytochrome P450 monooxygenase orf2 (488 aa).

The chain crosses the membrane as a helical span at residues 7–27 (LPGIFLPLAGCVLALSLTTIV). Residue Cys432 participates in heme binding.

This sequence belongs to the cytochrome P450 family. Heme is required as a cofactor.

The protein resides in the membrane. It functions in the pathway secondary metabolite biosynthesis. Its function is as follows. Cytochrome P450 monooxygenase; part of the gene cluster that mediates the biosynthesis of nigerpyrone and its derivatives carbonarone A and pestalamide A. The biosynthesis pathway begins with the polyketide assembly by epaA to form phenylacetyl triketide precursor from successive condensation of two malonyl-CoA, presumably with one phenylacetyl-CoA starter unit produced by the phenylacetyl-CoA ligase epaB. For the nigerpyrone biosynthesis, the reactive polyketide chain is released as an aldehyde through the R-domain. A nonenzymatic cyclization and dehydration may create nigerpyrone. For the biosynthesis of carbonarone A and pestalamide A, an extra methyl group is added through the C-methyltransferase domain. Several further steps involving the dehydrogenase orf1, the cytochrome P450 monooxygenase orf2 and the FAD-dependent monooxygenase orf3 are required to form a carbonarone A precursor which is converted to carbonarone A via cyclization. The O-acetyltransferase epaC could catalyze the transfer of 2-methylsuccinyl-CoA, a common intermediate in the ethylmalonyl-CoA pathway, to generate the final product pestalamide A. The sequence is that of Cytochrome P450 monooxygenase orf2 from Aspergillus niger (strain ATCC MYA-4892 / CBS 513.88 / FGSC A1513).